The sequence spans 491 residues: Diacylglycerol O-acyltransferase 1 (491 aa).

A disordered region spans residues 1–60 (MGDRGGAGGTRRRRTGSRPSSHGGGGPAAAEEEVRDAAAGPDMGAAGDAPAPAPSKDADD). Over 1-86 (MGDRGGAGGT…SLFSSDSGFN (86 aa)) the chain is Cytoplasmic. The tract at residues 1–94 (MGDRGGAGGT…FNNYRGILNW (94 aa)) is involved in homomerization. A phosphoserine mark is found at Ser20 and Ser21. The span at 37–50 (AAAGPDMGAAGDAP) shows a compositional bias: low complexity. The helical transmembrane segment at 87 to 121 (NYRGILNWCVVMLILSNARLFLENLIKYGILVDPI) threads the bilayer. Residues 122–133 (QVVSLFLKDPYS) lie on the Lumenal side of the membrane. An extracellular loop 1 (EL1) region spans residues 122–133 (QVVSLFLKDPYS). Residues 134–159 (WPAPCLVIAANVFAVAAFQVEKRLAV) traverse the membrane as a helical segment. An MBOAT fold region spans residues 134–491 (WPAPCLVIAA…LNYEAPVAGA (358 aa)). Over 160-164 (GALTE) the chain is Cytoplasmic. Residues 165-187 (QAGLLLHVANLATILCFPAAVVL) traverse the membrane as a helical segment. Residues 188-194 (LVESITP) lie on the Lumenal side of the membrane. Residues 195-226 (VGSLLALMVHTILFLKLFSYRDVNLWCRRARA) traverse the membrane as a helical segment. The Cytoplasmic segment spans residues 227–276 (KAASAGKRASSAAAPHTVSYPDNLTYRDLYYFLFAPTLCYELNFPRSPRI). The intracellular loop 1 (IL1) stretch occupies residues 227–279 (KAASAGKRASSAAAPHTVSYPDNLTYRDLYYFLFAPTLCYELNFPRSPRIRKR). The chain crosses the membrane as a helical span at residues 277-311 (RKRFLLRRILEMLFFTQLQVGLIQQWMVPTIQNSM). At 312–318 (KPFKDMD) the chain is on the lumenal side. The chain crosses the membrane as a helical span at residues 319 to 356 (YSRIIERLLKLAVPNHLIWLIFFYWLFHSCLNAVAELM). The Cytoplasmic portion of the chain corresponds to 357 to 402 (QFGDREFYRDWWNSESVTYFWQNWNIPVHKWCIRHFYKPMLRRGSS). Residues 357-402 (QFGDREFYRDWWNSESVTYFWQNWNIPVHKWCIRHFYKPMLRRGSS) are intracellular loop 2 (IL2). Positions 363-369 (FYRDWWN) match the FYXDWWN motif motif. Residues 377 to 385 (WQNWNIPVH), Tyr393, and Arg407 contribute to the an acyl-CoA site. The amphipathic helix (AH) stretch occupies residues 383-397 (PVHKWCIRHFYKPML). A helical membrane pass occupies residues 403-423 (RWMARIGVFLASAFFHEYLVS). His418 is an active-site residue. The Lumenal portion of the chain corresponds to 424–431 (VPLRMFRL). The chain crosses the membrane as a helical span at residues 432–450 (WAFTGMMAQIPLAWFVGRF). The Cytoplasmic portion of the chain corresponds to 451–452 (FQ). A helical membrane pass occupies residues 453–484 (GNYGNAAVWLTLIIGQPIAVLMYVHDYYVLNY). Tyr480 contributes to the an acyl-CoA binding site. At 485-491 (EAPVAGA) the chain is on the lumenal side.

The protein belongs to the membrane-bound acyltransferase family. Sterol o-acyltransferase subfamily. Homodimer or homotetramer; both forms have similar enzymatic activities.

It localises to the endoplasmic reticulum membrane. It carries out the reaction an acyl-CoA + a 1,2-diacyl-sn-glycerol = a triacyl-sn-glycerol + CoA. It catalyses the reaction all-trans-retinol + an acyl-CoA = an all-trans-retinyl ester + CoA. The catalysed reaction is 2-(9Z-octadecenoyl)-glycerol + (9Z)-octadecenoyl-CoA = 1,2-di-(9Z-octadecenoyl)-sn-glycerol + CoA. The enzyme catalyses 1,2-di-(9Z-octadecenoyl)-sn-glycerol + (9Z)-octadecenoyl-CoA = 1,2,3-tri-(9Z-octadecenoyl)-glycerol + CoA. It carries out the reaction all-trans-retinol + hexadecanoyl-CoA = all-trans-retinyl hexadecanoate + CoA. It catalyses the reaction 1-O-(9Z-octadecenyl)-glycerol + (9Z)-octadecenoyl-CoA = 1-O-(9Z-octadecyl)-3-(9Z-octadecenoyl)-glycerol + CoA. The catalysed reaction is 1-O-(9Z-octadecyl)-3-(9Z-octadecenoyl)-glycerol + (9Z)-octadecenoyl-CoA = 1-O-(9Z-octadecenyl)-2,3-di-(9Z-octadecenoyl)glycerol + CoA. The enzyme catalyses 1-(9Z-octadecenoyl)-glycerol + (9Z)-octadecenoyl-CoA = 1,2-di-(9Z-octadecenoyl)-glycerol + CoA. It carries out the reaction 1,2-di-(9Z-octadecenoyl)-glycerol + (9Z)-octadecenoate + H(+) = 1,2,3-tri-(9Z-octadecenoyl)-glycerol + H2O. It catalyses the reaction 1-octadecanoyl-2-(5Z,8Z,11Z,14Z-eicosatetraenoyl)-sn-glycerol + (9Z)-octadecenoyl-CoA = 1-octadecanoyl-2-(5Z,8Z,11Z,14Z)-eicosatetraenoyl-3-(9Z)-octadecenoyl-sn-glycerol + CoA. The catalysed reaction is hexadecane-1,2-diol + 2 hexadecanoyl-CoA = 1,2-O,O-dihexadecanoyl-1,2-hexadecanediol + 2 CoA. The enzyme catalyses hexadecane-1,2-diol + hexadecanoyl-CoA = 2-hydroxyhexadecyl hexadecanoate + CoA. It carries out the reaction 2-(9Z-octadecenoyl)-glycerol + hexadecanoyl-CoA = 1-hexadecanoyl-2-(9Z-octadecenoyl)-sn-glycerol + CoA. It catalyses the reaction 1,2-di-(9Z-octadecenoyl)-sn-glycerol + hexadecanoyl-CoA = 1,2-di-(9Z)-octadecenoyl-3-hexadecanoyl-sn-glycerol + CoA. The catalysed reaction is hexadecan-1-ol + hexadecanoyl-CoA = hexadecanyl hexadecanoate + CoA. The enzyme catalyses 13-cis-retinol + hexadecanoyl-CoA = 13-cis-retinyl hexadecanoate + CoA. It carries out the reaction 1,3-di-(9Z-octadecenoyl)-glycerol + (9Z)-octadecenoyl-CoA = 1,2,3-tri-(9Z-octadecenoyl)-glycerol + CoA. It catalyses the reaction 2,3-di-(9Z)-octadecenoyl-sn-glycerol + (9Z)-octadecenoyl-CoA = 1,2,3-tri-(9Z-octadecenoyl)-glycerol + CoA. It participates in lipid metabolism; glycerolipid metabolism. In terms of biological role, catalyzes the terminal and only committed step in triacylglycerol synthesis by using diacylglycerol and fatty acyl CoA as substrates. Highly expressed in epithelial cells of the small intestine and its activity is essential for the absorption of dietary fats. In liver, plays a role in esterifying exogenous fatty acids to glycerol, and is required to synthesize fat for storage. Also present in female mammary glands, where it produces fat in the milk. May be involved in VLDL (very low density lipoprotein) assembly. In contrast to DGAT2 it is not essential for survival. Functions as the major acyl-CoA retinol acyltransferase (ARAT) in the skin, where it acts to maintain retinoid homeostasis and prevent retinoid toxicity leading to skin and hair disorders. Exhibits additional acyltransferase activities, includin acyl CoA:monoacylglycerol acyltransferase (MGAT), wax monoester and wax diester synthases. Also able to use 1-monoalkylglycerol (1-MAkG) as an acyl acceptor for the synthesis of monoalkyl-monoacylglycerol (MAMAG). The chain is Diacylglycerol O-acyltransferase 1 (DGAT1) from Chlorocebus aethiops (Green monkey).